Consider the following 307-residue polypeptide: Holliday junction branch migration complex subunit RuvB (307 aa).

The large ATPase domain (RuvB-L) stretch occupies residues 1-167 (MKLQIKPPNT…FGVILNINYY (167 aa)). Ile-5, Gly-48, Lys-51, Thr-52, Thr-53, Arg-157, Tyr-167, and Arg-204 together coordinate ATP. Position 52 (Thr-52) interacts with Mg(2+). Residues 168 to 233 (SNAEIEKMVS…DLEGLFKNLM (66 aa)) are small ATPAse domain (RuvB-S). Residues 236–307 (KNGLQSIDVQ…NSGREYLVNF (72 aa)) form a head domain (RuvB-H) region. Arg-270, Lys-289, and Arg-294 together coordinate DNA.

Belongs to the RuvB family. In terms of assembly, homohexamer. Forms an RuvA(8)-RuvB(12)-Holliday junction (HJ) complex. HJ DNA is sandwiched between 2 RuvA tetramers; dsDNA enters through RuvA and exits via RuvB. An RuvB hexamer assembles on each DNA strand where it exits the tetramer. Each RuvB hexamer is contacted by two RuvA subunits (via domain III) on 2 adjacent RuvB subunits; this complex drives branch migration. In the full resolvosome a probable DNA-RuvA(4)-RuvB(12)-RuvC(2) complex forms which resolves the HJ.

Its subcellular location is the cytoplasm. It carries out the reaction ATP + H2O = ADP + phosphate + H(+). In terms of biological role, the RuvA-RuvB-RuvC complex processes Holliday junction (HJ) DNA during genetic recombination and DNA repair, while the RuvA-RuvB complex plays an important role in the rescue of blocked DNA replication forks via replication fork reversal (RFR). RuvA specifically binds to HJ cruciform DNA, conferring on it an open structure. The RuvB hexamer acts as an ATP-dependent pump, pulling dsDNA into and through the RuvAB complex. RuvB forms 2 homohexamers on either side of HJ DNA bound by 1 or 2 RuvA tetramers; 4 subunits per hexamer contact DNA at a time. Coordinated motions by a converter formed by DNA-disengaged RuvB subunits stimulates ATP hydrolysis and nucleotide exchange. Immobilization of the converter enables RuvB to convert the ATP-contained energy into a lever motion, pulling 2 nucleotides of DNA out of the RuvA tetramer per ATP hydrolyzed, thus driving DNA branch migration. The RuvB motors rotate together with the DNA substrate, which together with the progressing nucleotide cycle form the mechanistic basis for DNA recombination by continuous HJ branch migration. Branch migration allows RuvC to scan DNA until it finds its consensus sequence, where it cleaves and resolves cruciform DNA. This Mycoplasma genitalium (strain ATCC 33530 / DSM 19775 / NCTC 10195 / G37) (Mycoplasmoides genitalium) protein is Holliday junction branch migration complex subunit RuvB.